A 278-amino-acid chain; its full sequence is MSKEVSEEGRHGKDYVDPPPAPLLDMAELKLWSFYRAIIAEFIATLLFLYVTVATVIGHKNQTGPCGGVGLLGIAWAFGGMIFVLVYCTAGISGGHINPAVTFGLFLARKVSLPRAVAYMVAQCLGAICGVGLVKAFMMTPYKRLGGGANTVADGYSTGTALGAEIIGTFVLVYTVFSATDPKRSARDSHVPVLAPLPIGFAVFMVHLATIPITGTGINPARSFGAAVIYNNEKAWDDHWIFWVGPFVGALAAAAYHQYILRAAAIKALASFRSNPTN.

An N-acetylmethionine modification is found at Met-1. At Met-1–Arg-36 the chain is on the cytoplasmic side. N6,N6-dimethyllysine is present on Lys-3. The helical transmembrane segment at Ala-37–Ile-57 threads the bilayer. Residues Gly-58–Ile-74 are Extracellular-facing. Residues Ala-75–Gly-95 form a helical membrane-spanning segment. The Cytoplasmic portion of the chain corresponds to His-96 to Ala-116. Positions Asn-98–Ala-100 match the NPA 1 motif. Residues Val-117–Phe-137 form a helical membrane-spanning segment. The Extracellular portion of the chain corresponds to Met-138 to Thr-158. Residues Gly-159–Ala-179 form a helical membrane-spanning segment. The Cytoplasmic portion of the chain corresponds to Thr-180–Pro-192. A helical membrane pass occupies residues Val-193 to Ile-213. Over Thr-214–Trp-240 the chain is Extracellular. The NPA 2 signature appears at Asn-219–Ala-221. Residues Ile-241 to Leu-261 form a helical membrane-spanning segment. At Arg-262–Asn-278 the chain is on the cytoplasmic side. Residues Ser-271 and Ser-274 each carry the phosphoserine modification.

The protein belongs to the MIP/aquaporin (TC 1.A.8) family. PIP (TC 1.A.8.11) subfamily. As to expression, expressed in roots and floral buds.

It is found in the cell membrane. In terms of biological role, aquaporins facilitate the transport of water and small neutral solutes across cell membranes. The protein is Probable aquaporin PIP2-8 (PIP2-8) of Arabidopsis thaliana (Mouse-ear cress).